The following is a 2224-amino-acid chain: Coagulation factor V (2224 aa).

Positions 1-28 (MFPGCPRLWVLVVLGTSWVGWGSQGTEA) are cleaved as a signal peptide. 4 consecutive Plastocyanin-like domains span residues 30–193 (QLRQ…LLIC), 203–329 (TQKT…IKNC), 348–526 (KRWE…LLIC), and 536–684 (IQRA…DVKC). F5/8 type A domains follow at residues 30-329 (QLRQ…IKNC) and 348-684 (KRWE…DVKC). Asn51 and Asn55 each carry an N-linked (GlcNAc...) asparagine glycan. 2 residues coordinate Ca(2+): Asp139 and Asp140. Cys167 and Cys193 are joined by a disulfide. Residues Asn239, Asn297, Asn382, Asn460, and Asn468 are each glycosylated (N-linked (GlcNAc...) asparagine). Cys248 and Cys329 form a disulfide bridge. Cys500 and Cys526 are oxidised to a cystine. Residue Asn554 is glycosylated (N-linked (GlcNAc...) asparagine). Residues Cys603 and Cys684 are joined by a disulfide bond. Thr640 is subject to Phosphothreonine. The b stretch occupies residues 692 to 1573 (SYEIFEPPES…PDNIAAWYLR (882 aa)). A sulfotyrosine mark is found at Tyr693, Tyr724, and Tyr726. Positions 738–1573 (SFRNSSLNQE…PDNIAAWYLR (836 aa)) are cleaved as a propeptide — activation peptide (connecting region). N-linked (GlcNAc...) asparagine glycans are attached at residues Asn741, Asn752, Asn760, Asn776, and Asn782. Thr805 is a glycosylation site (O-linked (GalNAc...) threonine). Asn821 is a glycosylation site (N-linked (GlcNAc...) asparagine). A compositionally biased stretch (polar residues) spans 822 to 831 (SSTAEHSSPY). The interval 822 to 842 (SSTAEHSSPYSEDPIEDPLQP) is disordered. Ser859 is subject to Phosphoserine; by FAM20C. The disordered stretch occupies residues 894 to 927 (LSQDTGSPSGMRPWEDLPSQDTGSPSRMRPWKDP). Tandem repeats lie at residues 895–911 (SQDTGSPSGMRPWEDLP) and 912–928 (SQDTGSPSRMRPWKDPP). The segment at 895-928 (SQDTGSPSGMRPWEDLPSQDTGSPSRMRPWKDPP) is 2 X 17 AA tandem repeats. 2 N-linked (GlcNAc...) asparagine glycosylation sites follow: Asn938 and Asn977. 2 disordered regions span residues 982–1001 (WGESTPLANKPGKQSGHPKF) and 1029–1048 (TRKKKKEKHTHHAPLSPRTF). Residues 1029-1040 (TRKKKKEKHTHH) are compositionally biased toward basic residues. N-linked (GlcNAc...) asparagine glycosylation is found at Asn1074, Asn1083, Asn1103, and Asn1106. Positions 1097-1157 (LPDHNQNSSN…SSSPELSEML (61 aa)) are disordered. The span at 1099–1111 (DHNQNSSNDTGQA) shows a compositional bias: polar residues. The span at 1139–1154 (HSTSDPSHRSSSPELS) shows a compositional bias: low complexity. 35 consecutive repeat copies span residues 1185-1193 (VISPDLSQV), 1194-1202 (TLSPELSQT), 1203-1211 (NLSPDLSHT), 1212-1220 (TLSPELIQR), 1221-1229 (NLSPALGQM), 1230-1238 (PISPDLSHT), 1239-1247 (TLSPDLSHT), 1248-1256 (TLSLDLSQT), 1257-1265 (NLSPELSQT), 1266-1274 (NLSPALGQM), 1275-1283 (PLSPDLSHT), 1284-1292 (TLSLDFSQT), 1293-1301 (NLSPELSHM), 1302-1310 (TLSPELSQT), 1311-1319 (NLSPALGQM), 1320-1328 (PISPDLSHT), 1329-1337 (TLSLDFSQT), 1338-1346 (NLSPELSQT), 1347-1355 (NLSPALGQM), 1356-1364 (PLSPDPSHT), 1365-1373 (TLSLDLSQT), 1374-1382 (NLSPELSQT), 1383-1391 (NLSPDLSEM), 1392-1400 (PLFADLSQI), 1401-1409 (PLTPDLDQM), 1410-1418 (TLSPDLGET), 1419-1427 (DLSPNFGQM), 1428-1436 (SLSPDLSQV), 1437-1445 (TLSPDISDT), 1446-1454 (TLLPDLSQI), 1455-1463 (SPPPDLDQI), 1464-1472 (FYPSESSQS), 1473-1481 (LLLQEFNES), 1482-1490 (FPYPDLGQM), and 1493-1501 (PSSPTLNDT). A 35 X 9 AA approximate tandem repeats of [TNP]-L-S-P-D-L-S-Q-T region spans residues 1185 to 1501 (VISPDLSQVT…SPSSPTLNDT (317 aa)). A disordered region spans residues 1341-1367 (PELSQTNLSPALGQMPLSPDPSHTTLS). N-linked (GlcNAc...) asparagine glycosylation occurs at Asn1479. The N-linked (GlcNAc...) asparagine glycan is linked to Asn1499. Tyr1522, Tyr1538, and Tyr1543 each carry sulfotyrosine. The N-linked (GlcNAc...) asparagine glycan is linked to Asn1559. Plastocyanin-like domains follow at residues 1578–1751 (NRRN…LLIC) and 1761–1907 (NMPM…DRDC). The region spanning 1578–1907 (NRRNYYIAAE…TPFLIMDRDC (330 aa)) is the F5/8 type A 3 domain. Sulfotyrosine is present on Tyr1593. N-linked (GlcNAc...) asparagine glycosylation occurs at Asn1703. Cysteines 1725 and 1751 form a disulfide. Residues His1843 and His1845 each contribute to the Cu cation site. Disulfide bonds link Cys1907-Cys2061 and Cys2066-Cys2221. F5/8 type C domains follow at residues 1907 to 2061 (CRMP…LQGC) and 2066 to 2221 (CSTP…LFGC). N-linked (GlcNAc...) asparagine glycans are attached at residues Asn2010 and Asn2209.

Belongs to the multicopper oxidase family. In terms of assembly, factor Va, the activated form of factor V, is composed of a heavy chain and a light chain, non-covalently bound. The interaction between the two chains is calcium-dependent. Forms heterodimer with SERPINA5. In terms of processing, thrombin activates factor V proteolytically to the active cofactor, factor Va (formation of a heavy chain at the N-terminus and a light chain at the C-terminus). Post-translationally, sulfation is required for efficient thrombin cleavage and activation and for full procoagulant activity. Activated protein C inactivates factor V and factor Va by proteolytic degradation. In terms of processing, phosphorylated by FAM20C in the extracellular medium. As to expression, plasma.

Its subcellular location is the secreted. Its activity is regulated as follows. Inhibited by SERPINA5. In terms of biological role, central regulator of hemostasis. It serves as a critical cofactor for the prothrombinase activity of factor Xa that results in the activation of prothrombin to thrombin. The chain is Coagulation factor V (F5) from Homo sapiens (Human).